The following is a 186-amino-acid chain: uncharacterized protein (186 aa).

The signal sequence occupies residues 1 to 21 (MKFFLGSALFLILTFINLVRA). The Extracellular segment spans residues 22-142 (EFEFITPAED…AFSVNPIDKK (121 aa)). N62, N75, N93, and N104 each carry an N-linked (GlcNAc...) asparagine glycan. A helical membrane pass occupies residues 143–163 (LAIGLSVGLSCCILIVLFLHF). Residues 164–186 (ATRRERRILKNEKELEMSSYRKH) lie on the Cytoplasmic side of the membrane.

The protein resides in the membrane. This is an uncharacterized protein from Schizosaccharomyces pombe (strain 972 / ATCC 24843) (Fission yeast).